Here is a 118-residue protein sequence, read N- to C-terminus: Crustacean hyperglycemic hormones 2 (118 aa).

Positions Met1 to Ala22 are cleaved as a signal peptide. Disulfide bonds link Cys51/Cys87, Cys67/Cys83, and Cys70/Cys96. A Valine amide modification is found at Val116.

It belongs to the arthropod CHH/MIH/GIH/VIH hormone family.

It is found in the secreted. Hormone found in the sinus gland of isopods and decapods which controls the blood sugar level. Has a secretagogue action over the amylase released from the midgut gland. May act as a stress hormone and may be involved in the control of molting and reproduction. This is Crustacean hyperglycemic hormones 2 (CHH2) from Penaeus monodon (Giant tiger prawn).